Reading from the N-terminus, the 318-residue chain is NADH-ubiquinone oxidoreductase chain 1 (318 aa).

A run of 8 helical transmembrane segments spans residues 2–22, 68–88, 100–120, 146–166, 171–191, 213–233, 253–273, and 285–305; these read PMTN…FLML, ITLY…LWTP, LGLL…LWSG, LAII…STLV, HLWL…STLA, IEYA…NIIM, ELYT…FLWI, and LMHL…MWYI.

It belongs to the complex I subunit 1 family. In terms of assembly, core subunit of respiratory chain NADH dehydrogenase (Complex I) which is composed of 45 different subunits.

The protein localises to the mitochondrion inner membrane. It catalyses the reaction a ubiquinone + NADH + 5 H(+)(in) = a ubiquinol + NAD(+) + 4 H(+)(out). Functionally, core subunit of the mitochondrial membrane respiratory chain NADH dehydrogenase (Complex I) which catalyzes electron transfer from NADH through the respiratory chain, using ubiquinone as an electron acceptor. Essential for the catalytic activity and assembly of complex I. The polypeptide is NADH-ubiquinone oxidoreductase chain 1 (MT-ND1) (Pan troglodytes (Chimpanzee)).